A 487-amino-acid chain; its full sequence is Probable Xaa-Pro aminopeptidase MGYG_06974 (487 aa).

Mn(2+) is bound by residues Asp255, Asp266, Glu414, and Glu458.

It belongs to the peptidase M24B family. Mn(2+) serves as cofactor.

It catalyses the reaction Release of any N-terminal amino acid, including proline, that is linked to proline, even from a dipeptide or tripeptide.. In terms of biological role, catalyzes the removal of a penultimate prolyl residue from the N-termini of peptides. This is Probable Xaa-Pro aminopeptidase MGYG_06974 from Arthroderma gypseum (strain ATCC MYA-4604 / CBS 118893) (Microsporum gypseum).